A 303-amino-acid polypeptide reads, in one-letter code: Glutamate formimidoyltransferase (303 aa).

The active-site For formimidoyltransferase activity is the histidine 81. Residue 164–172 (GPSVVGKAG) participates in folate binding.

This sequence belongs to the formiminotransferase family.

The protein resides in the cytoplasm. It catalyses the reaction (6S)-5-formyl-5,6,7,8-tetrahydrofolate + L-glutamate = N-formyl-L-glutamate + (6S)-5,6,7,8-tetrahydrofolate + H(+). The catalysed reaction is 5-formimidoyltetrahydrofolate + L-glutamate = N-formimidoyl-L-glutamate + (6S)-5,6,7,8-tetrahydrofolate. The enzyme catalyses (6S)-5-formyl-5,6,7,8-tetrahydrofolate + ATP = (6R)-5,10-methenyltetrahydrofolate + ADP + phosphate. The protein operates within amino-acid degradation; L-histidine degradation into L-glutamate; L-glutamate from N-formimidoyl-L-glutamate (transferase route): step 1/1. It functions in the pathway one-carbon metabolism; tetrahydrofolate interconversion. Its function is as follows. Catalyzes the transfer of the formyl group from N-formylglutamate to tetrahydrofolate (THF) to yield 5-formyltetrahydrofolate (5-CHO-THF) and glutamate (Glu). The triglutamate form of 5-CHO-THF (5-CHO-THF-Glu3) can also be used as substrate. It can also catalyze the transfer of the formimino group from N-formiminoglutamate to tetrahydrofolate (THF) to yield 5-formiminotetrahydrofolate (5-NH=CH-THF) and glutamate (Glu). It can replace YgfA to catalyze the irreversible ATP-dependent transformation of 5-CHO-THF to form 5,10-methenyltetrahydrofolate (5,10-CH=THF). This Thermoplasma acidophilum (strain ATCC 25905 / DSM 1728 / JCM 9062 / NBRC 15155 / AMRC-C165) protein is Glutamate formimidoyltransferase.